The chain runs to 518 residues: Nitrogenase iron-iron protein alpha chain (518 aa).

Cysteine 49 and cysteine 75 together coordinate [8Fe-7S] cluster. [8Fe-9S-C-homocitryl] cluster is bound by residues cysteine 257 and histidine 423.

In terms of assembly, hexamer of two alpha, two beta, and two delta chains. [8Fe-7S] cluster serves as cofactor. It depends on [8Fe-9S-C-homocitryl] cluster as a cofactor.

It carries out the reaction N2 + 8 reduced [2Fe-2S]-[ferredoxin] + 16 ATP + 16 H2O = H2 + 8 oxidized [2Fe-2S]-[ferredoxin] + 2 NH4(+) + 16 ADP + 16 phosphate + 6 H(+). In terms of biological role, this iron-iron protein is part of the nitrogenase complex that catalyzes the key enzymatic reactions in nitrogen fixation. Other nitrogenase complexes utilize a molybdenum-iron protein or a vanadium-iron protein. The sequence is that of Nitrogenase iron-iron protein alpha chain (anfD) from Ruminiclostridium hungatei (Clostridium hungatei).